The chain runs to 466 residues: Soluble pyridine nucleotide transhydrogenase (466 aa).

36–45 (ERYHNVGGGC) provides a ligand contact to FAD.

It belongs to the class-I pyridine nucleotide-disulfide oxidoreductase family. Requires FAD as cofactor.

The protein localises to the cytoplasm. It catalyses the reaction NAD(+) + NADPH = NADH + NADP(+). In terms of biological role, conversion of NADPH, generated by peripheral catabolic pathways, to NADH, which can enter the respiratory chain for energy generation. This chain is Soluble pyridine nucleotide transhydrogenase, found in Salmonella gallinarum (strain 287/91 / NCTC 13346).